The primary structure comprises 416 residues: Diaminopimelate decarboxylase (416 aa).

K60 carries the post-translational modification N6-(pyridoxal phosphate)lysine. Pyridoxal 5'-phosphate-binding positions include G240 and 274–277; that span reads EPGR. Substrate is bound by residues R277, R313, and Y317. C343 serves as the catalytic Proton donor. E344 and Y371 together coordinate substrate. Y371 lines the pyridoxal 5'-phosphate pocket.

It belongs to the Orn/Lys/Arg decarboxylase class-II family. LysA subfamily. In terms of assembly, homodimer. Pyridoxal 5'-phosphate is required as a cofactor.

It carries out the reaction meso-2,6-diaminopimelate + H(+) = L-lysine + CO2. Its pathway is amino-acid biosynthesis; L-lysine biosynthesis via DAP pathway; L-lysine from DL-2,6-diaminopimelate: step 1/1. Specifically catalyzes the decarboxylation of meso-diaminopimelate (meso-DAP) to L-lysine. This chain is Diaminopimelate decarboxylase, found in Pseudomonas fluorescens.